Reading from the N-terminus, the 670-residue chain is ATP-dependent DNA helicase Rep (670 aa).

The UvrD-like helicase ATP-binding domain maps to 1 to 277; the sequence is MLFNEHQKKA…IIMQHNYRSS (277 aa). Residues 22-29 and Arg275 each bind ATP; that span reads AGAGSGKT. The UvrD-like helicase C-terminal domain occupies 278–562; it reads GRILKVANAL…QLMTLHASKG (285 aa).

Belongs to the helicase family. UvrD subfamily. As to quaternary structure, homodimer.

The enzyme catalyses Couples ATP hydrolysis with the unwinding of duplex DNA by translocating in the 3'-5' direction.. It carries out the reaction ATP + H2O = ADP + phosphate + H(+). Functionally, rep helicase is a single-stranded DNA-dependent ATPase involved in DNA replication; it can initiate unwinding at a nick in the DNA. It binds to the single-stranded DNA and acts in a progressive fashion along the DNA in the 3' to 5' direction. In Buchnera aphidicola subsp. Baizongia pistaciae (strain Bp), this protein is ATP-dependent DNA helicase Rep.